The following is a 257-amino-acid chain: 3-oxo-5-alpha-steroid 4-dehydrogenase 1 (257 aa).

6 helical membrane passes run 7-27 (FLLDALAYLECALGVVCYVLL), 50-70 (AAWTVQELPSLALPLLACAGA), 84-104 (ILLAMFLVHYAQRSLVFPFLI), 109-129 (PMPLYAFLLAFIFCTYNGYLQ), 149-169 (FLTGSALWLIGMLINIHSDHV), and 208-228 (ALASWSIQGWAFAVFTFCVLF).

This sequence belongs to the steroid 5-alpha reductase family.

The protein localises to the microsome membrane. It is found in the endoplasmic reticulum membrane. The catalysed reaction is a 3-oxo-5alpha-steroid + NADP(+) = a 3-oxo-Delta(4)-steroid + NADPH + H(+). The enzyme catalyses 5alpha-pregnane-3,20-dione + NADP(+) = progesterone + NADPH + H(+). It catalyses the reaction 17beta-hydroxy-5alpha-androstan-3-one + NADP(+) = testosterone + NADPH + H(+). It carries out the reaction androst-4-ene-3,17-dione + NADPH + H(+) = 5alpha-androstan-3,17-dione + NADP(+). Converts testosterone into 5-alpha-dihydrotestosterone and progesterone or corticosterone into their corresponding 5-alpha-3-oxosteroids. It plays a central role in sexual differentiation and androgen physiology. The sequence is that of 3-oxo-5-alpha-steroid 4-dehydrogenase 1 (SRD5A1) from Bos taurus (Bovine).